The chain runs to 443 residues: ATP-dependent protease ATPase subunit HslU (443 aa).

Residues Ile-18, Gly-60–Glu-65, Asp-256, Glu-321, and Arg-393 each bind ATP.

It belongs to the ClpX chaperone family. HslU subfamily. In terms of assembly, a double ring-shaped homohexamer of HslV is capped on each side by a ring-shaped HslU homohexamer. The assembly of the HslU/HslV complex is dependent on binding of ATP.

It is found in the cytoplasm. Its function is as follows. ATPase subunit of a proteasome-like degradation complex; this subunit has chaperone activity. The binding of ATP and its subsequent hydrolysis by HslU are essential for unfolding of protein substrates subsequently hydrolyzed by HslV. HslU recognizes the N-terminal part of its protein substrates and unfolds these before they are guided to HslV for hydrolysis. The protein is ATP-dependent protease ATPase subunit HslU of Escherichia coli O157:H7 (strain EC4115 / EHEC).